The following is a 158-amino-acid chain: Cyclic pyranopterin monophosphate synthase (158 aa).

Residues 75-77 and 113-114 each bind substrate; these read LCH and ME. Aspartate 128 is an active-site residue.

The protein belongs to the MoaC family. Homohexamer; trimer of dimers.

It carries out the reaction (8S)-3',8-cyclo-7,8-dihydroguanosine 5'-triphosphate = cyclic pyranopterin phosphate + diphosphate. It participates in cofactor biosynthesis; molybdopterin biosynthesis. Catalyzes the conversion of (8S)-3',8-cyclo-7,8-dihydroguanosine 5'-triphosphate to cyclic pyranopterin monophosphate (cPMP). In Actinobacillus pleuropneumoniae serotype 5b (strain L20), this protein is Cyclic pyranopterin monophosphate synthase.